The following is a 73-amino-acid chain: Large ribosomal subunit protein uL29 (73 aa).

Belongs to the universal ribosomal protein uL29 family.

The chain is Large ribosomal subunit protein uL29 (rpmC) from Synechocystis sp. (strain ATCC 27184 / PCC 6803 / Kazusa).